Reading from the N-terminus, the 228-residue chain is L-ribulose-5-phosphate 4-epimerase UlaF (228 aa).

Substrate-binding positions include Gly-26–Asn-27, Ser-43–Gly-44, and Ser-72–Ser-73. The Zn(2+) site is built by Asp-74, His-93, and His-95. Asp-118 (proton donor/acceptor) is an active-site residue. Position 167 (His-167) interacts with Zn(2+). Tyr-225 (proton donor/acceptor) is an active-site residue.

This sequence belongs to the aldolase class II family. AraD/FucA subfamily. Requires Zn(2+) as cofactor.

It catalyses the reaction L-ribulose 5-phosphate = D-xylulose 5-phosphate. It participates in cofactor degradation; L-ascorbate degradation; D-xylulose 5-phosphate from L-ascorbate: step 4/4. Catalyzes the isomerization of L-ribulose 5-phosphate to D-xylulose 5-phosphate. Is involved in the anaerobic L-ascorbate utilization. The polypeptide is L-ribulose-5-phosphate 4-epimerase UlaF (Salmonella paratyphi B (strain ATCC BAA-1250 / SPB7)).